The sequence spans 129 residues: Glycine cleavage system H protein (129 aa).

The 83-residue stretch at 24-106 (TYTVGITEHA…YAGGWIFKIK (83 aa)) folds into the Lipoyl-binding domain. Lys65 carries the N6-lipoyllysine modification.

The protein belongs to the GcvH family. In terms of assembly, the glycine cleavage system is composed of four proteins: P, T, L and H. (R)-lipoate is required as a cofactor.

In terms of biological role, the glycine cleavage system catalyzes the degradation of glycine. The H protein shuttles the methylamine group of glycine from the P protein to the T protein. The polypeptide is Glycine cleavage system H protein (Shigella dysenteriae serotype 1 (strain Sd197)).